Reading from the N-terminus, the 267-residue chain is Tryptophan synthase alpha chain (267 aa).

Residues E49 and D60 each act as proton acceptor in the active site.

The protein belongs to the TrpA family. In terms of assembly, tetramer of two alpha and two beta chains.

The enzyme catalyses (1S,2R)-1-C-(indol-3-yl)glycerol 3-phosphate + L-serine = D-glyceraldehyde 3-phosphate + L-tryptophan + H2O. Its pathway is amino-acid biosynthesis; L-tryptophan biosynthesis; L-tryptophan from chorismate: step 5/5. Functionally, the alpha subunit is responsible for the aldol cleavage of indoleglycerol phosphate to indole and glyceraldehyde 3-phosphate. This Rippkaea orientalis (strain PCC 8801 / RF-1) (Cyanothece sp. (strain PCC 8801)) protein is Tryptophan synthase alpha chain.